A 304-amino-acid polypeptide reads, in one-letter code: Transcription factor BEE 2 (304 aa).

The interval 74 to 132 (FHMEPVKNNGHSRAITLQNKRKPEGKTEKREKKKIKAEDETEPSMKGKSNMSNTETSSE) is disordered. Positions 82 to 91 (NGHSRAITLQ) are enriched in polar residues. A compositionally biased stretch (basic and acidic residues) spans 94-103 (RKPEGKTEKR). Over residues 120–132 (GKSNMSNTETSSE) the composition is skewed to polar residues. The 51-residue stretch at 147-197 (EATDRHSLAERARREKISKKMKCLQDIVPGCNKVTGKAGMLDEIINYVQSL) folds into the bHLH domain.

In terms of assembly, homodimer. As to expression, expressed in stems and flowers.

The protein resides in the nucleus. Positive regulator of brassinosteroid signaling. The chain is Transcription factor BEE 2 (BEE2) from Arabidopsis thaliana (Mouse-ear cress).